A 176-amino-acid chain; its full sequence is Adenine phosphoribosyltransferase (176 aa).

It belongs to the purine/pyrimidine phosphoribosyltransferase family. As to quaternary structure, homodimer.

The protein resides in the cytoplasm. It carries out the reaction AMP + diphosphate = 5-phospho-alpha-D-ribose 1-diphosphate + adenine. The protein operates within purine metabolism; AMP biosynthesis via salvage pathway; AMP from adenine: step 1/1. Functionally, catalyzes a salvage reaction resulting in the formation of AMP, that is energically less costly than de novo synthesis. The protein is Adenine phosphoribosyltransferase of Borreliella afzelii (strain PKo) (Borrelia afzelii).